A 36-amino-acid polypeptide reads, in one-letter code: Cecropin-D (36 aa).

A Lysine amide modification is found at K36.

It belongs to the cecropin family.

Its subcellular location is the secreted. Cecropins have lytic and antibacterial activity against several Gram-positive and Gram-negative bacteria. This chain is Cecropin-D, found in Antheraea pernyi (Chinese oak silk moth).